We begin with the raw amino-acid sequence, 165 residues long: UPF0303 protein Bcenmc03_1534 (165 aa).

The protein belongs to the UPF0303 family.

The sequence is that of UPF0303 protein Bcenmc03_1534 from Burkholderia orbicola (strain MC0-3).